Reading from the N-terminus, the 311-residue chain is Thioredoxin reductase (311 aa).

FAD is bound by residues 31–39 (FEKGMPGGQ) and 32–39 (EKGMPGGQ). C133 and C136 are disulfide-bonded. 281–290 (DIRIFAPKQV) contacts FAD.

The protein belongs to the class-II pyridine nucleotide-disulfide oxidoreductase family. In terms of assembly, homodimer. The cofactor is FAD.

Its subcellular location is the cytoplasm. It catalyses the reaction [thioredoxin]-dithiol + NADP(+) = [thioredoxin]-disulfide + NADPH + H(+). The protein is Thioredoxin reductase (trxB) of Helicobacter pylori (strain J99 / ATCC 700824) (Campylobacter pylori J99).